A 165-amino-acid chain; its full sequence is Aspartate carbamoyltransferase regulatory chain (165 aa).

Positions 121, 126, 149, and 152 each coordinate Zn(2+).

Belongs to the PyrI family. As to quaternary structure, contains catalytic and regulatory chains. Requires Zn(2+) as cofactor.

In terms of biological role, involved in allosteric regulation of aspartate carbamoyltransferase. This Methanoregula boonei (strain DSM 21154 / JCM 14090 / 6A8) protein is Aspartate carbamoyltransferase regulatory chain.